Reading from the N-terminus, the 212-residue chain is Methylthioribulose-1-phosphate dehydratase (212 aa).

His97 and His99 together coordinate Zn(2+).

This sequence belongs to the aldolase class II family. MtnB subfamily. In terms of assembly, homotetramer. Zn(2+) serves as cofactor.

It catalyses the reaction 5-(methylsulfanyl)-D-ribulose 1-phosphate = 5-methylsulfanyl-2,3-dioxopentyl phosphate + H2O. It participates in amino-acid biosynthesis; L-methionine biosynthesis via salvage pathway; L-methionine from S-methyl-5-thio-alpha-D-ribose 1-phosphate: step 2/6. Functionally, catalyzes the dehydration of methylthioribulose-1-phosphate (MTRu-1-P) into 2,3-diketo-5-methylthiopentyl-1-phosphate (DK-MTP-1-P). In Bacillus thuringiensis (strain Al Hakam), this protein is Methylthioribulose-1-phosphate dehydratase.